Consider the following 107-residue polypeptide: Urease subunit beta (107 aa).

This sequence belongs to the urease beta subunit family. Heterotrimer of UreA (gamma), UreB (beta) and UreC (alpha) subunits. Three heterotrimers associate to form the active enzyme.

It localises to the cytoplasm. The catalysed reaction is urea + 2 H2O + H(+) = hydrogencarbonate + 2 NH4(+). The protein operates within nitrogen metabolism; urea degradation; CO(2) and NH(3) from urea (urease route): step 1/1. This is Urease subunit beta from Janthinobacterium sp. (strain Marseille) (Minibacterium massiliensis).